Reading from the N-terminus, the 623-residue chain is uncharacterized protein (623 aa).

5 consecutive transmembrane segments (helical) span residues Ile-242–Leu-262, Ile-288–Phe-308, Val-318–Phe-338, Val-361–Val-381, and Phe-387–Val-407.

The protein belongs to the MscS (TC 1.A.23) family.

It localises to the cell membrane. This is an uncharacterized protein from Helicobacter pylori (strain ATCC 700392 / 26695) (Campylobacter pylori).